Here is a 512-residue protein sequence, read N- to C-terminus: Amidase 2 (512 aa).

Residues Lys-122 and Ser-197 each act as charge relay system in the active site. Substrate-binding positions include Ser-197 and 218 to 221 (IGGS). The active-site Acyl-ester intermediate is Ser-221.

This sequence belongs to the amidase family.

The catalysed reaction is a monocarboxylic acid amide + H2O = a monocarboxylate + NH4(+). The protein operates within xenobiotic degradation. Its function is as follows. Amidase; part of the Fusarium detoxification of benzoxazolinone cluster 2 (FDB2) involved in the degradation of benzoxazolinones produced by the host plant. Maize, wheat, and rye produce the 2 benzoxazinone phytoanticipins 2,4-dihy-droxy-7-methoxy-1,4-benzoxazin-3-one (DIMBOA) and 2,4-dihydroxy-1,4-benzoxazin-3-one (DIBOA) that, due to their inherent instability once released, spontaneously degrade to the more stable corresponding benzoxazolinones, 6-methoxy-2-benzoxazolinone (MBOA) and 2-benzoxazolinone (BOA), respectively. The first step in the detoxification of benzoxazolinones involves the hydrolysis of the cyclic ester bond of benzoxazolinones by the FDB1 cluster gamma-lactamase MBL1 to aminophenols. MBL1 is able to convert BOA into 2-aminophenol (2-AP), as well as MBOA into 5-methoxy-2-aminophenol (2-AMP). The FDB2 cluster N-malonyltransferase FDB2/NAT1 then metabolizes aminophenols via N-malonylation to non-toxic malonamic acids. FDB2/NAT1 converts 2-AP into N-(2-hydroxyphenyl) malonamic acid (HPMA) and 2-AMP into N-(2-hydroxy-4-methoxyphenyl) malonamic acid (HMPMA). The duplicated dienlactone hydrolases DLH1 and DLH2 may provide redundant function for hydrolyzing the lactone moiety in the BOA molecule. The roles of the amidases an other enzymes encoded by the 2 FDB clusters have not been identified so far. This is Amidase 2 from Gibberella moniliformis (strain M3125 / FGSC 7600) (Maize ear and stalk rot fungus).